A 420-amino-acid chain; its full sequence is Gamma-glutamyl phosphate reductase (420 aa).

This sequence belongs to the gamma-glutamyl phosphate reductase family.

It is found in the cytoplasm. The enzyme catalyses L-glutamate 5-semialdehyde + phosphate + NADP(+) = L-glutamyl 5-phosphate + NADPH + H(+). It functions in the pathway amino-acid biosynthesis; L-proline biosynthesis; L-glutamate 5-semialdehyde from L-glutamate: step 2/2. Catalyzes the NADPH-dependent reduction of L-glutamate 5-phosphate into L-glutamate 5-semialdehyde and phosphate. The product spontaneously undergoes cyclization to form 1-pyrroline-5-carboxylate. The sequence is that of Gamma-glutamyl phosphate reductase from Streptococcus pneumoniae (strain JJA).